The primary structure comprises 199 residues: Prefoldin subunit 3 (199 aa).

Met-1 bears the N-acetylmethionine mark.

Belongs to the prefoldin subunit alpha family. Heterohexamer of two PFD-alpha type and four PFD-beta type subunits.

Binds specifically to cytosolic chaperonin (c-CPN) and transfers target proteins to it. Binds to nascent polypeptide chain and promotes folding in an environment in which there are many competing pathways for nonnative proteins. This chain is Prefoldin subunit 3 (PAC10), found in Saccharomyces cerevisiae (strain ATCC 204508 / S288c) (Baker's yeast).